The following is a 384-amino-acid chain: uncharacterized protein (384 aa).

Residues 327 to 339 (KKEKKEKKEKKPK) are compositionally biased toward basic residues. Residues 327–358 (KKEKKEKKEKKPKKAVEEEPKQYLTPEFVNDD) are disordered.

This is an uncharacterized protein from Magallana gigas (Pacific oyster).